The following is a 1465-amino-acid chain: Myomesin-2 (1465 aa).

The segment at 38-61 (ASTQASSQKSLSQRSSSQRASSQT) is disordered. Over residues 41 to 61 (QASSQKSLSQRSSSQRASSQT) the composition is skewed to low complexity. 2 Ig-like C2-type domains span residues 154–245 (PEIL…AAVV) and 266–371 (PLSS…AFLF). 5 consecutive Fibronectin type-III domains span residues 385–480 (APMD…ALDP), 513–608 (PPTG…AQDV), 614–707 (APGR…VQAA), 710–812 (VPSH…TMPE), and 815–912 (PAYD…ARPG). Ig-like C2-type domains lie at 904-1002 (PVLV…EELE), 1130-1211 (PHFA…QDVS), and 1345-1434 (RLIG…VTVS). The tract at residues 1442–1465 (IPDMAPPQQAKPKLIPASASAAGQ) is disordered.

As to quaternary structure, interacts with TTN/titin.

The protein localises to the cytoplasm. Its subcellular location is the myofibril. It localises to the sarcomere. The protein resides in the m line. Functionally, major component of the vertebrate myofibrillar M band. Binds myosin, titin, and light meromyosin. This binding is dose dependent. The protein is Myomesin-2 (MYOM2) of Homo sapiens (Human).